The chain runs to 71 residues: Long neurotoxin 5 (71 aa).

5 disulfides stabilise this stretch: Cys-3–Cys-20, Cys-14–Cys-41, Cys-26–Cys-30, Cys-45–Cys-56, and Cys-57–Cys-62.

The protein belongs to the three-finger toxin family. Long-chain subfamily. Type II alpha-neurotoxin sub-subfamily. Expressed by the venom gland.

Its subcellular location is the secreted. Its function is as follows. Binds with high affinity to muscular (alpha-1/CHRNA1) and neuronal (alpha-7/CHRNA7) nicotinic acetylcholine receptor (nAChR) and inhibits acetylcholine from binding to the receptor, thereby impairing neuromuscular and neuronal transmission. This Naja naja (Indian cobra) protein is Long neurotoxin 5.